Reading from the N-terminus, the 356-residue chain is Pyruvate dehydrogenase E1 component subunit beta, mitochondrial (356 aa).

A mitochondrion-targeting transit peptide spans 1–25 (MLSSILKKIQPSLLVNFRIITRTYA). Residue Glu85 coordinates thiamine diphosphate. Residues Ile138, Ala186, Ile187, Asp189, and Asn191 each coordinate K(+).

Tetramer of 2 alpha and 2 beta subunits. Requires thiamine diphosphate as cofactor.

It localises to the mitochondrion matrix. The catalysed reaction is N(6)-[(R)-lipoyl]-L-lysyl-[protein] + pyruvate + H(+) = N(6)-[(R)-S(8)-acetyldihydrolipoyl]-L-lysyl-[protein] + CO2. The pyruvate dehydrogenase complex catalyzes the overall conversion of pyruvate to acetyl-CoA and CO(2). It contains multiple copies of three enzymatic components: pyruvate dehydrogenase (E1), dihydrolipoamide acetyltransferase (E2) and lipoamide dehydrogenase (E3). The protein is Pyruvate dehydrogenase E1 component subunit beta, mitochondrial (pdhB) of Dictyostelium discoideum (Social amoeba).